A 341-amino-acid chain; its full sequence is Methionine import ATP-binding protein MetN 1 (341 aa).

An ABC transporter domain is found at 2–241; that stretch reads IEFRQVSKSF…PKTTIAQNFV (240 aa). Position 38–45 (38–45) interacts with ATP; that stretch reads GYSGAGKS.

It belongs to the ABC transporter superfamily. Methionine importer (TC 3.A.1.24) family. The complex is composed of two ATP-binding proteins (MetN), two transmembrane proteins (MetI) and a solute-binding protein (MetQ).

It is found in the cell membrane. It carries out the reaction L-methionine(out) + ATP + H2O = L-methionine(in) + ADP + phosphate + H(+). It catalyses the reaction D-methionine(out) + ATP + H2O = D-methionine(in) + ADP + phosphate + H(+). Functionally, part of the ABC transporter complex MetNIQ involved in methionine import. Responsible for energy coupling to the transport system. The polypeptide is Methionine import ATP-binding protein MetN 1 (Staphylococcus aureus (strain bovine RF122 / ET3-1)).